A 78-amino-acid chain; its full sequence is Large ribosomal subunit protein bL28 (78 aa).

The segment at methionine 1–histidine 20 is disordered.

This sequence belongs to the bacterial ribosomal protein bL28 family.

In Photobacterium profundum (strain SS9), this protein is Large ribosomal subunit protein bL28.